Consider the following 428-residue polypeptide: Histidine--tRNA ligase (428 aa).

The protein belongs to the class-II aminoacyl-tRNA synthetase family. As to quaternary structure, homodimer.

It localises to the cytoplasm. It carries out the reaction tRNA(His) + L-histidine + ATP = L-histidyl-tRNA(His) + AMP + diphosphate + H(+). The polypeptide is Histidine--tRNA ligase (Bordetella avium (strain 197N)).